The chain runs to 137 residues: uncharacterized protein (137 aa).

This is an uncharacterized protein from Mycobacterium leprae (strain TN).